We begin with the raw amino-acid sequence, 502 residues long: MAISFLCFCLITLASLIFFAKKIKHLKWNLPPSPPKFPVIGNLHQIGELPHRSLQHLAERYGPVMLLHFGFVPVTVVSSREAAEEVLRTHDLDCCSRPKLVGTRLLSRNFKDVCFTPYGNEWKARRKFALRELFCLKKVQSFRHIREEECNFLVKQLSESAVNRSPVDLSKSLFWLTASIFFRVALGQNFHESNFIDKEKIEELVFEAETALASFTCSDFFPVAGLGWLVDWFSGQHKRLNDVFYKLDALFQHVIDDHLNPGRSKEHEDIIDSMLDAIHKEGKDSSLELIIDHIKGFLANIFLAGIDTGALTMIWAMTELVKNPKLIKKVQGEIREQLGSNKARITEEDIDKVPYLKMVIKETFRLHPAAPLILPRETMAHIKVQGYDIPPKRRILVNVSAIGRDPKLWTNPEEFDPERFMDSSVDYRGQHYELLPFGSGRRICPGMPMGIAAVELGLLNLLYFFDWKLPDGMTHKDIDTEEAGTLTIVKKVPLQLVPVRVQ.

Residues 1 to 21 form a helical membrane-spanning segment; it reads MAISFLCFCLITLASLIFFAK. Cysteine 444 lines the heme pocket.

This sequence belongs to the cytochrome P450 family. Requires heme as cofactor.

The protein resides in the membrane. This Arabidopsis thaliana (Mouse-ear cress) protein is Cytochrome P450 71B20 (CYP71B20).